A 130-amino-acid polypeptide reads, in one-letter code: Protein NrdI (130 aa).

Belongs to the NrdI family.

Its function is as follows. Probably involved in ribonucleotide reductase function. The chain is Protein NrdI from Bartonella bacilliformis (strain ATCC 35685 / KC583 / Herrer 020/F12,63).